A 572-amino-acid chain; its full sequence is Urease subunit alpha (572 aa).

A Urease domain is found at 132–572 (GGFDSHIHFI…LPMAQRYFMY (441 aa)). 3 residues coordinate Ni(2+): histidine 137, histidine 139, and lysine 220. Lysine 220 carries the N6-carboxylysine modification. A substrate-binding site is contributed by histidine 222. Histidine 249 and histidine 275 together coordinate Ni(2+). Histidine 323 acts as the Proton donor in catalysis. A Ni(2+)-binding site is contributed by aspartate 363.

It belongs to the metallo-dependent hydrolases superfamily. Urease alpha subunit family. Heterotrimer of UreA (gamma), UreB (beta) and UreC (alpha) subunits. Three heterotrimers associate to form the active enzyme. Ni cation is required as a cofactor. Carboxylation allows a single lysine to coordinate two nickel ions.

Its subcellular location is the cytoplasm. It catalyses the reaction urea + 2 H2O + H(+) = hydrogencarbonate + 2 NH4(+). The protein operates within nitrogen metabolism; urea degradation; CO(2) and NH(3) from urea (urease route): step 1/1. The chain is Urease subunit alpha from Bradyrhizobium diazoefficiens (strain JCM 10833 / BCRC 13528 / IAM 13628 / NBRC 14792 / USDA 110).